We begin with the raw amino-acid sequence, 477 residues long: Regulatory protein HrpB (477 aa).

The region spanning 375-477 (RRAYRYIIEN…NEAPSETIWR (103 aa)) is the HTH araC/xylS-type domain. 2 consecutive DNA-binding regions (H-T-H motif) follow at residues 393 to 414 (REVA…KSAV) and 444 to 467 (IIDT…RKQF).

In terms of biological role, positive regulation of hypersensitive response genes involved in plant pathogenicity and partly of its own synthesis in minimal medium. The sequence is that of Regulatory protein HrpB (hrpB) from Ralstonia nicotianae (strain ATCC BAA-1114 / GMI1000) (Ralstonia solanacearum).